Here is a 384-residue protein sequence, read N- to C-terminus: S-adenosylmethionine synthase (384 aa).

H15 contributes to the ATP binding site. A Mg(2+)-binding site is contributed by D17. E43 serves as a coordination point for K(+). Residues E56 and Q99 each coordinate L-methionine. Residues 99–109 are flexible loop; sequence QSSDINQGVDR. ATP-binding positions include 164–166, 230–231, D239, 245–246, A262, and K266; these read DAK, RF, and RK. L-methionine is bound at residue D239. Residue K270 participates in L-methionine binding.

The protein belongs to the AdoMet synthase family. In terms of assembly, homotetramer; dimer of dimers. It depends on Mg(2+) as a cofactor. Requires K(+) as cofactor.

The protein resides in the cytoplasm. It catalyses the reaction L-methionine + ATP + H2O = S-adenosyl-L-methionine + phosphate + diphosphate. It functions in the pathway amino-acid biosynthesis; S-adenosyl-L-methionine biosynthesis; S-adenosyl-L-methionine from L-methionine: step 1/1. In terms of biological role, catalyzes the formation of S-adenosylmethionine (AdoMet) from methionine and ATP. The overall synthetic reaction is composed of two sequential steps, AdoMet formation and the subsequent tripolyphosphate hydrolysis which occurs prior to release of AdoMet from the enzyme. The chain is S-adenosylmethionine synthase from Pasteurella multocida (strain Pm70).